Here is a 404-residue protein sequence, read N- to C-terminus: Formate-dependent phosphoribosylglycinamide formyltransferase (404 aa).

N(1)-(5-phospho-beta-D-ribosyl)glycinamide contacts are provided by residues 25–26 (EL) and E85. ATP is bound by residues R118, K159, 164–169 (SSGKGQ), 199–202 (EGFV), and E207. The ATP-grasp domain maps to 123–318 (RLAAEELGLP…EFELHARAIL (196 aa)). Residues E277 and E289 each contribute to the Mg(2+) site. Residues D296, K365, and 372-373 (RR) contribute to the N(1)-(5-phospho-beta-D-ribosyl)glycinamide site.

This sequence belongs to the PurK/PurT family. In terms of assembly, homodimer.

The catalysed reaction is N(1)-(5-phospho-beta-D-ribosyl)glycinamide + formate + ATP = N(2)-formyl-N(1)-(5-phospho-beta-D-ribosyl)glycinamide + ADP + phosphate + H(+). Its pathway is purine metabolism; IMP biosynthesis via de novo pathway; N(2)-formyl-N(1)-(5-phospho-D-ribosyl)glycinamide from N(1)-(5-phospho-D-ribosyl)glycinamide (formate route): step 1/1. Functionally, involved in the de novo purine biosynthesis. Catalyzes the transfer of formate to 5-phospho-ribosyl-glycinamide (GAR), producing 5-phospho-ribosyl-N-formylglycinamide (FGAR). Formate is provided by PurU via hydrolysis of 10-formyl-tetrahydrofolate. This is Formate-dependent phosphoribosylglycinamide formyltransferase from Burkholderia cenocepacia (strain HI2424).